Here is a 453-residue protein sequence, read N- to C-terminus: Nuclear and cytoplasmic polyadenylated RNA-binding protein PUB1 (453 aa).

A disordered region spans residues 1–67; the sequence is MSENNEEQHQ…PSVVPANAIT (67 aa). The residue at position 2 (S2) is an N-acetylserine. 2 consecutive RRM domains span residues 75–152 and 162–240; these read RVLY…WAFQ and FNLF…WAAK. A disordered region spans residues 241-262; sequence RDNNNNNNYQQRRNYGNNNRGG. Residues 244 to 262 show a composition bias toward low complexity; that stretch reads NNNNNYQQRRNYGNNNRGG. R260 bears the Omega-N-methylarginine mark. An RNA-binding RGG-box region spans residues 260 to 264; sequence RGGFR. An RRM 3 domain is found at 341 to 413; it reads TTAYIGNIPH…RNLRTGWGKE (73 aa). The disordered stretch occupies residues 419–453; it reads PQQQQQGGQPLIMNDQQQPVMSEQQQQQQQQQQQQ. The span at 434–453 shows a compositional bias: low complexity; it reads QQQPVMSEQQQQQQQQQQQQ.

In terms of assembly, interacts with NAB2.

It localises to the cytoplasm. The protein resides in the nucleus. The protein localises to the P-body. Its subcellular location is the stress granule. May be associated with hnRNA within the nucleus and remains associated during nucleocytoplasmic mRNA transport, once the proteins are in the cytoplasm, disassembly of PUB1-RNA complexes may occur prior to PAB1 binding and formation of a translationally competent RNP complex. Binds to polyadenylated RNA; prefers to bind poly(rU); binds to T-rich single-stranded DNA. The sequence is that of Nuclear and cytoplasmic polyadenylated RNA-binding protein PUB1 from Saccharomyces cerevisiae (strain ATCC 204508 / S288c) (Baker's yeast).